The following is an 828-amino-acid chain: Outer membrane usher protein PmfC (828 aa).

An N-terminal signal peptide occupies residues M1–A28.

It belongs to the fimbrial export usher family.

The protein resides in the cell outer membrane. Functionally, involved in the export and assembly of PMF fimbrial subunits across the outer membrane. This is Outer membrane usher protein PmfC (pmfC) from Proteus mirabilis (strain HI4320).